The sequence spans 209 residues: Iron-sulfur cluster assembly 2 homolog, mitochondrial (209 aa).

The N-terminal 27 residues, 1–27, are a transit peptide targeting the mitochondrion; sequence MIRSIFKKNSSLPYFLKRSFITKPHSI. The Fe cation site is built by C134, C199, and C201.

Belongs to the HesB/IscA family. Fe cation is required as a cofactor.

The protein resides in the mitochondrion. In terms of biological role, involved in the maturation of mitochondrial 4Fe-4S proteins functioning late in the iron-sulfur cluster assembly pathway. May be involved in the binding of an intermediate of Fe/S cluster assembly. In Dictyostelium discoideum (Social amoeba), this protein is Iron-sulfur cluster assembly 2 homolog, mitochondrial (isca2).